The primary structure comprises 162 residues: Fibroblast growth factor 22 (162 aa).

Residues Met1 to Gly22 form the signal peptide.

Belongs to the heparin-binding growth factors family. In terms of assembly, interacts with FGFR1 and FGFR2. Interacts with FGFBP1. In terms of tissue distribution, preferentially expressed in skin; low expression in brain. Expressed in the inner root sheath of the hair follicle.

Its subcellular location is the secreted. Functionally, plays a role in the fasting response, glucose homeostasis, lipolysis and lipogenesis. Can stimulate cell proliferation (in vitro). May be involved in hair development. This chain is Fibroblast growth factor 22 (Fgf22), found in Mus musculus (Mouse).